A 66-amino-acid polypeptide reads, in one-letter code: UPF0434 protein RPC_0266 (66 aa).

The protein belongs to the UPF0434 family.

The protein is UPF0434 protein RPC_0266 of Rhodopseudomonas palustris (strain BisB18).